The sequence spans 537 residues: CTP synthase (537 aa).

The amidoligase domain stretch occupies residues 1-267; the sequence is MTKYIFVTGG…DQIVCDHLKL (267 aa). Residue Ser-13 participates in CTP binding. Residue Ser-13 coordinates UTP. An ATP-binding site is contributed by 14–19; that stretch reads SIGKGI. Tyr-54 serves as a coordination point for L-glutamine. Asp-71 contacts ATP. Asp-71 and Glu-141 together coordinate Mg(2+). Residues 148–150, 188–193, and Lys-224 contribute to the CTP site; these read DIE and KTKPTQ. UTP-binding positions include 188-193 and Lys-224; that span reads KTKPTQ. 240–242 contacts ATP; the sequence is RDV. Positions 292 to 535 constitute a Glutamine amidotransferase type-1 domain; that stretch reads RIALVGKYVE…VTAAVKNKNQ (244 aa). L-glutamine is bound at residue Gly-354. Catalysis depends on Cys-381, which acts as the Nucleophile; for glutamine hydrolysis. Residues 382 to 385, Glu-405, and Arg-463 each bind L-glutamine; that span reads LGMQ. Active-site residues include His-508 and Glu-510.

This sequence belongs to the CTP synthase family. Homotetramer.

It carries out the reaction UTP + L-glutamine + ATP + H2O = CTP + L-glutamate + ADP + phosphate + 2 H(+). The enzyme catalyses L-glutamine + H2O = L-glutamate + NH4(+). The catalysed reaction is UTP + NH4(+) + ATP = CTP + ADP + phosphate + 2 H(+). It participates in pyrimidine metabolism; CTP biosynthesis via de novo pathway; CTP from UDP: step 2/2. Allosterically activated by GTP, when glutamine is the substrate; GTP has no effect on the reaction when ammonia is the substrate. The allosteric effector GTP functions by stabilizing the protein conformation that binds the tetrahedral intermediate(s) formed during glutamine hydrolysis. Inhibited by the product CTP, via allosteric rather than competitive inhibition. Functionally, catalyzes the ATP-dependent amination of UTP to CTP with either L-glutamine or ammonia as the source of nitrogen. Regulates intracellular CTP levels through interactions with the four ribonucleotide triphosphates. The chain is CTP synthase from Streptococcus equi subsp. equi (strain 4047).